The primary structure comprises 442 residues: D-serine dehydratase (442 aa).

Lysine 118 bears the N6-(pyridoxal phosphate)lysine mark.

It belongs to the serine/threonine dehydratase family. DsdA subfamily. In terms of assembly, monomer. The cofactor is pyridoxal 5'-phosphate.

It catalyses the reaction D-serine = pyruvate + NH4(+). The polypeptide is D-serine dehydratase (Shigella sonnei (strain Ss046)).